A 436-amino-acid chain; its full sequence is Trigger factor (436 aa).

2 disordered regions span residues 1–26 (MQVSVETTEGLGRRMTVQVPAERVEN) and 81–100 (QESLRPAGNPHIEPKRTGEG). The PPIase FKBP-type domain maps to 161–246 (EDRVVIDFHG…VKRVEEPQLP (86 aa)).

The protein belongs to the FKBP-type PPIase family. Tig subfamily.

It is found in the cytoplasm. It carries out the reaction [protein]-peptidylproline (omega=180) = [protein]-peptidylproline (omega=0). Involved in protein export. Acts as a chaperone by maintaining the newly synthesized protein in an open conformation. Functions as a peptidyl-prolyl cis-trans isomerase. The polypeptide is Trigger factor (Halorhodospira halophila (strain DSM 244 / SL1) (Ectothiorhodospira halophila (strain DSM 244 / SL1))).